The following is a 305-amino-acid chain: Tetraspanin-12 (305 aa).

Topologically, residues 1–12 are cytoplasmic; it reads MAREDSVKCLRC. Residues Cys9 and Cys12 are each lipidated (S-palmitoyl cysteine). A helical transmembrane segment spans residues 13–33; it reads LLYALNLLFWLMSISVLAVSA. Over 34 to 59 the chain is Extracellular; it reads WMRDYLNNVLTLTAETRVEEAVILTY. Residues 60-80 form a helical membrane-spanning segment; that stretch reads FPVVHPVMIAVCCFLIIVGML. At 81–89 the chain is on the cytoplasmic side; sequence GYCGTVKRN. A lipid anchor (S-palmitoyl cysteine) is attached at Cys83. The chain crosses the membrane as a helical span at residues 90 to 110; that stretch reads LLLLAWYFGSLLVIFCVELAC. Residues 111 to 224 are Extracellular-facing; sequence GVWTYEQEIM…RGTKQLQVLR (114 aa). The helical transmembrane segment at 225–245 threads the bilayer; it reads FLGISIGVTQILAMILTITLL. At 246 to 305 the chain is on the cytoplasmic side; that stretch reads WALYYDRREPGTDQMMALKNDTTQHLPCHSVELLKPSLSRIFEHTSMANSFNTHFEMEEL.

It belongs to the tetraspanin (TM4SF) family. In terms of assembly, component of a complex, at least composed of TSPAN12, FZD4 and norrin (NDP). Interacts (when palmitoylated) with ADAM10. Interacts with MMP14/MT1-MMP. Post-translationally, palmitoylated; required for interaction with ADAM10. The precise position of palmitoylated residues is unclear and occurs either on Cys-9, Cys-12 and/or Cys-83.

The protein localises to the cell membrane. Its function is as follows. Regulator of cell surface receptor signal transduction. Plays a central role in retinal vascularization by regulating norrin (NDP) signal transduction. Acts in concert with norrin (NDP) to promote FZD4 multimerization and subsequent activation of FZD4, leading to promote accumulation of beta-catenin (CTNNB1) and stimulate LEF/TCF-mediated transcriptional programs. Suprisingly, it only activates the norrin (NDP)-dependent activation of FZD4, while it does not activate the Wnt-dependent activation of FZD4, suggesting the existence of a Wnt-independent signaling that also promote accumulation the beta-catenin (CTNNB1). Acts as a regulator of membrane proteinases such as ADAM10 and MMP14/MT1-MMP. Activates ADAM10-dependent cleavage activity of amyloid precursor protein (APP). Activates MMP14/MT1-MMP-dependent cleavage activity. In Bos taurus (Bovine), this protein is Tetraspanin-12 (TSPAN12).